Reading from the N-terminus, the 239-residue chain is Cysteine-rich venom protein (239 aa).

Positions 1 to 18 (MIVFILLSLAAVLQQSVA) are cleaved as a signal peptide. Residues 37–165 (VDMHNSFRRS…PYNYFYVCQY (129 aa)) form the SCP domain. 7 disulfides stabilise this stretch: cysteine 74–cysteine 152, cysteine 91–cysteine 166, cysteine 147–cysteine 163, cysteine 185–cysteine 192, cysteine 188–cysteine 197, cysteine 210–cysteine 228, and cysteine 219–cysteine 232. The 34-residue stretch at 201–234 (CPINNVFTNCDSLLQQSSCEDSYITTNCGASCFC) folds into the ShKT domain.

The protein belongs to the CRISP family. As to expression, expressed by the venom gland.

It is found in the secreted. Blocks contraction of smooth muscle elicited by high potassium-induced depolarization, but does not block caffeine-stimulated contraction. May target voltage-gated calcium channels on smooth muscle. This chain is Cysteine-rich venom protein, found in Cerberus rynchops (Dog-faced water snake).